We begin with the raw amino-acid sequence, 458 residues long: Chromosomal replication initiator protein DnaA (458 aa).

Residues 1 to 93 (MKTELSEVWQ…NVIEDPAAEP (93 aa)) form a domain I, interacts with DnaA modulators region. The tract at residues 94–119 (VDAPNVADLPAGTSAPAAEQNARLLG) is domain II. The interval 120–336 (YINPKYTFET…GALTRVVAYA (217 aa)) is domain III, AAA+ region. Gly164, Gly166, Lys167, and Thr168 together coordinate ATP. The domain IV, binds dsDNA stretch occupies residues 337–458 (NMLKCPLTYD…EQLIARIRAE (122 aa)).

Belongs to the DnaA family. In terms of assembly, oligomerizes as a right-handed, spiral filament on DNA at oriC.

The protein resides in the cytoplasm. In terms of biological role, plays an essential role in the initiation and regulation of chromosomal replication. ATP-DnaA binds to the origin of replication (oriC) to initiate formation of the DNA replication initiation complex once per cell cycle. Binds the DnaA box (a 9 base pair repeat at the origin) and separates the double-stranded (ds)DNA. Forms a right-handed helical filament on oriC DNA; dsDNA binds to the exterior of the filament while single-stranded (ss)DNA is stabiized in the filament's interior. The ATP-DnaA-oriC complex binds and stabilizes one strand of the AT-rich DNA unwinding element (DUE), permitting loading of DNA polymerase. After initiation quickly degrades to an ADP-DnaA complex that is not apt for DNA replication. Binds acidic phospholipids. This chain is Chromosomal replication initiator protein DnaA, found in Symbiobacterium thermophilum (strain DSM 24528 / JCM 14929 / IAM 14863 / T).